Here is a 156-residue protein sequence, read N- to C-terminus: Methylated-DNA--protein-cysteine methyltransferase (156 aa).

Cys-120 (nucleophile; methyl group acceptor) is an active-site residue.

Belongs to the MGMT family.

Its subcellular location is the cytoplasm. It carries out the reaction a 6-O-methyl-2'-deoxyguanosine in DNA + L-cysteinyl-[protein] = S-methyl-L-cysteinyl-[protein] + a 2'-deoxyguanosine in DNA. It catalyses the reaction a 4-O-methyl-thymidine in DNA + L-cysteinyl-[protein] = a thymidine in DNA + S-methyl-L-cysteinyl-[protein]. In terms of biological role, involved in the cellular defense against the biological effects of O6-methylguanine (O6-MeG) and O4-methylthymine (O4-MeT) in DNA. Repairs the methylated nucleobase in DNA by stoichiometrically transferring the methyl group to a cysteine residue in the enzyme. This is a suicide reaction: the enzyme is irreversibly inactivated. This chain is Methylated-DNA--protein-cysteine methyltransferase, found in Sulfurisphaera tokodaii (strain DSM 16993 / JCM 10545 / NBRC 100140 / 7) (Sulfolobus tokodaii).